A 91-amino-acid polypeptide reads, in one-letter code: Small ribosomal subunit protein uS19 (91 aa).

Belongs to the universal ribosomal protein uS19 family.

Its function is as follows. Protein S19 forms a complex with S13 that binds strongly to the 16S ribosomal RNA. The chain is Small ribosomal subunit protein uS19 from Neorickettsia sennetsu (strain ATCC VR-367 / Miyayama) (Ehrlichia sennetsu).